The sequence spans 229 residues: Non-structural protein P8 (229 aa).

The segment covering 13–31 has biased composition (basic and acidic residues); sequence KMKHNQDRVEEPSQVRVDD. Residues 13–46 are disordered; that stretch reads KMKHNQDRVEEPSQVRVDDTISQPPRYAPSAPMP. Positions 36–46 are enriched in low complexity; the sequence is PPRYAPSAPMP. Transmembrane regions (helical) follow at residues 119–139 and 162–182; these read IIHTTLLVAAVVALLTSVCTL and SLNPMLGVVNLGATFLMMVCA.

The protein belongs to the orbivirus NS3 family. As to quaternary structure, forms homooligomers via coiled-coil motif. Interacts with host OPTN; this interaction inhibits innate immune response.

Its subcellular location is the host cell membrane. The protein resides in the host Golgi apparatus. Its function is as follows. Plays a role in the inhibition of host innate immune response. Interacts with host OPTN and thus inhibits the recruitment of TBK1 to the host Golgi apparatus. In turn, downstream partner IRF3 cannot be activated and IFN-beta production is impaired. In terms of biological role, facilitates viral particle release either by increasing plasma membrane permeability through a viroporin-like activity or by viral budding. The polypeptide is Non-structural protein P8 (Segment-10) (Antilocapra americana (Pronghorn)).